Consider the following 116-residue polypeptide: Ribosome-binding factor A (116 aa).

The protein belongs to the RbfA family. As to quaternary structure, monomer. Binds 30S ribosomal subunits, but not 50S ribosomal subunits or 70S ribosomes.

It localises to the cytoplasm. In terms of biological role, one of several proteins that assist in the late maturation steps of the functional core of the 30S ribosomal subunit. Associates with free 30S ribosomal subunits (but not with 30S subunits that are part of 70S ribosomes or polysomes). Required for efficient processing of 16S rRNA. May interact with the 5'-terminal helix region of 16S rRNA. The sequence is that of Ribosome-binding factor A from Pediococcus pentosaceus (strain ATCC 25745 / CCUG 21536 / LMG 10740 / 183-1w).